The following is a 296-amino-acid chain: Bifunctional protein FolD (296 aa).

Residues 166–168 (GRS), Ser-195, and Ile-236 contribute to the NADP(+) site.

The protein belongs to the tetrahydrofolate dehydrogenase/cyclohydrolase family. Homodimer.

It carries out the reaction (6R)-5,10-methylene-5,6,7,8-tetrahydrofolate + NADP(+) = (6R)-5,10-methenyltetrahydrofolate + NADPH. The catalysed reaction is (6R)-5,10-methenyltetrahydrofolate + H2O = (6R)-10-formyltetrahydrofolate + H(+). Its pathway is one-carbon metabolism; tetrahydrofolate interconversion. In terms of biological role, catalyzes the oxidation of 5,10-methylenetetrahydrofolate to 5,10-methenyltetrahydrofolate and then the hydrolysis of 5,10-methenyltetrahydrofolate to 10-formyltetrahydrofolate. The polypeptide is Bifunctional protein FolD (Chlorobium limicola (strain DSM 245 / NBRC 103803 / 6330)).